A 620-amino-acid chain; its full sequence is DNA mismatch repair protein MutL (620 aa).

Residues 332-402 form a disordered region; the sequence is SELGLEAQPE…YRTPLRPATH (71 aa). Low complexity predominate over residues 352 to 365; it reads SNSTNSNVSSTSYS. Residues 378-394 show a composition bias toward polar residues; sequence PLTTTATSYNQGQSSYR.

The protein belongs to the DNA mismatch repair MutL/HexB family.

In terms of biological role, this protein is involved in the repair of mismatches in DNA. It is required for dam-dependent methyl-directed DNA mismatch repair. May act as a 'molecular matchmaker', a protein that promotes the formation of a stable complex between two or more DNA-binding proteins in an ATP-dependent manner without itself being part of a final effector complex. In Shewanella piezotolerans (strain WP3 / JCM 13877), this protein is DNA mismatch repair protein MutL.